We begin with the raw amino-acid sequence, 232 residues long: 5'-methylthioadenosine/S-adenosylhomocysteine nucleosidase (232 aa).

Catalysis depends on Glu-12, which acts as the Proton acceptor. Substrate contacts are provided by residues Gly-78, Val-153, and 174-175 (ME). Asp-198 acts as the Proton donor in catalysis.

Belongs to the PNP/UDP phosphorylase family. MtnN subfamily.

The catalysed reaction is S-adenosyl-L-homocysteine + H2O = S-(5-deoxy-D-ribos-5-yl)-L-homocysteine + adenine. It carries out the reaction S-methyl-5'-thioadenosine + H2O = 5-(methylsulfanyl)-D-ribose + adenine. The enzyme catalyses 5'-deoxyadenosine + H2O = 5-deoxy-D-ribose + adenine. It functions in the pathway amino-acid biosynthesis; L-methionine biosynthesis via salvage pathway; S-methyl-5-thio-alpha-D-ribose 1-phosphate from S-methyl-5'-thioadenosine (hydrolase route): step 1/2. In terms of biological role, catalyzes the irreversible cleavage of the glycosidic bond in both 5'-methylthioadenosine (MTA) and S-adenosylhomocysteine (SAH/AdoHcy) to adenine and the corresponding thioribose, 5'-methylthioribose and S-ribosylhomocysteine, respectively. Also cleaves 5'-deoxyadenosine, a toxic by-product of radical S-adenosylmethionine (SAM) enzymes, into 5-deoxyribose and adenine. This is 5'-methylthioadenosine/S-adenosylhomocysteine nucleosidase from Photobacterium profundum (strain SS9).